Here is a 694-residue protein sequence, read N- to C-terminus: Elongation factor G (694 aa).

The 275-residue stretch at Lys11 to Leu285 folds into the tr-type G domain. Residues Ala20–Thr27, Asp84–His88, and Asn138–Asp141 contribute to the GTP site.

The protein belongs to the TRAFAC class translation factor GTPase superfamily. Classic translation factor GTPase family. EF-G/EF-2 subfamily.

It localises to the cytoplasm. In terms of biological role, catalyzes the GTP-dependent ribosomal translocation step during translation elongation. During this step, the ribosome changes from the pre-translocational (PRE) to the post-translocational (POST) state as the newly formed A-site-bound peptidyl-tRNA and P-site-bound deacylated tRNA move to the P and E sites, respectively. Catalyzes the coordinated movement of the two tRNA molecules, the mRNA and conformational changes in the ribosome. The polypeptide is Elongation factor G (Mycoplasma mobile (strain ATCC 43663 / 163K / NCTC 11711) (Mesomycoplasma mobile)).